The sequence spans 333 residues: Testin-2 (333 aa).

A signal peptide spans M1–T17. Disulfide bonds link C135/C178, C169/C211, and C269/C322. The N-linked (GlcNAc...) asparagine glycan is linked to N173. Residues H276 and N300 contribute to the active site.

It belongs to the peptidase C1 family. Expressed in testis and ovary. Low level in spleen, epididymis, kidney, and uterus. Expressed in primary cultures of Sertoli cells.

The protein resides in the secreted. The chain is Testin-2 from Mus musculus (Mouse).